Here is a 299-residue protein sequence, read N- to C-terminus: Oxygen-dependent coproporphyrinogen-III oxidase (299 aa).

Substrate is bound at residue S92. Residues H96 and H106 each contribute to the Mn(2+) site. The Proton donor role is filled by H106. Position 108–110 (N108–R110) interacts with substrate. 2 residues coordinate Mn(2+): H145 and H175. An important for dimerization region spans residues Y240–E275. G258–R260 serves as a coordination point for substrate.

This sequence belongs to the aerobic coproporphyrinogen-III oxidase family. In terms of assembly, homodimer. Requires Mn(2+) as cofactor.

It localises to the cytoplasm. The enzyme catalyses coproporphyrinogen III + O2 + 2 H(+) = protoporphyrinogen IX + 2 CO2 + 2 H2O. Its pathway is porphyrin-containing compound metabolism; protoporphyrin-IX biosynthesis; protoporphyrinogen-IX from coproporphyrinogen-III (O2 route): step 1/1. In terms of biological role, involved in the heme biosynthesis. Catalyzes the aerobic oxidative decarboxylation of propionate groups of rings A and B of coproporphyrinogen-III to yield the vinyl groups in protoporphyrinogen-IX. This chain is Oxygen-dependent coproporphyrinogen-III oxidase, found in Escherichia coli O127:H6 (strain E2348/69 / EPEC).